Consider the following 94-residue polypeptide: MNLYDVIKKPLITEKTTIEKDSKNVVSFEVDRDANKIEIKEAVEKLFKVEVAEVNTVNVAGKVKRFGRHYGKRSNWKKAYVTLKEGSSVDFFEI.

Belongs to the universal ribosomal protein uL23 family. As to quaternary structure, part of the 50S ribosomal subunit. Contacts protein L29, and trigger factor when it is bound to the ribosome.

One of the early assembly proteins it binds 23S rRNA. One of the proteins that surrounds the polypeptide exit tunnel on the outside of the ribosome. Forms the main docking site for trigger factor binding to the ribosome. In Geobacter sulfurreducens (strain ATCC 51573 / DSM 12127 / PCA), this protein is Large ribosomal subunit protein uL23.